The chain runs to 1026 residues: PH and SEC7 domain-containing protein 1 (1026 aa).

4 disordered regions span residues 25 to 97 (WLPE…PGAR), 126 to 196 (SWDL…PNGL), 246 to 403 (SLDP…GPDS), and 436 to 538 (PTQS…LDST). Residues 71 to 95 (RGPPSPRIAPSPWAPSSPTGQPPPG) show a composition bias toward pro residues. Residues Ser-126 and Ser-156 each carry the phosphoserine modification. Residues 168–184 (PGTQGLLQGPPTQPQVG) are compositionally biased toward low complexity. The segment covering 300–313 (DIDEVLTEREEADS) has biased composition (acidic residues). Residues 328–340 (ARPPAPRPGPCLG) are compositionally biased toward pro residues. A compositionally biased stretch (acidic residues) spans 349-367 (NEDEDEAGGEEDVDDEVFE). A compositionally biased stretch (pro residues) spans 447–465 (PPQPPAPRPDPPAPAPLAP). One can recognise an SEC7 domain in the interval 514 to 708 (GAAPLGSEPP…KALYSSIKNE (195 aa)). Position 722 is a phosphoserine (Ser-722). One can recognise a PH domain in the interval 758–871 (AVYKHGALVR…WITRINVVAA (114 aa)). The stretch at 900–926 (LSQEEQVRTHEAKLKAMASELREHRAT) forms a coiled coil. Disordered stretches follow at residues 924 to 943 (RATQ…QRQK) and 978 to 1026 (AVAQ…RWKP). The span at 934 to 943 (GKEAEEQRQK) shows a compositional bias: basic and acidic residues. Polar residues predominate over residues 1000 to 1012 (ANTSSQPRAQCSD).

The protein belongs to the PSD family. In terms of assembly, interacts with ACTN1.

It localises to the cell membrane. Its subcellular location is the cell projection. The protein resides in the ruffle membrane. It is found in the cleavage furrow. Guanine nucleotide exchange factor for ARF6. Induces cytoskeletal remodeling. This Bos taurus (Bovine) protein is PH and SEC7 domain-containing protein 1 (PSD).